We begin with the raw amino-acid sequence, 161 residues long: Small ribosomal subunit protein uS9 (161 aa).

This sequence belongs to the universal ribosomal protein uS9 family.

The sequence is that of Small ribosomal subunit protein uS9 from Rickettsia felis (strain ATCC VR-1525 / URRWXCal2) (Rickettsia azadi).